The following is a 374-amino-acid chain: Pulmonary surfactant-associated protein D (374 aa).

Positions Met1 to Gly19 are cleaved as a signal peptide. An S-nitrosocysteine mark is found at Cys34 and Cys39. Residues Ser40–Pro221 form a disordered region. One can recognise a Collagen-like domain in the interval Gly45 to Pro221. The segment covering Arg49–Asp64 has biased composition (basic and acidic residues). Hydroxyproline is present on Pro77. 5-hydroxylysine is present on Lys86. The N-linked (GlcNAc...) asparagine glycan is linked to Asn89. Position 95 is a hydroxyproline (Pro95). Position 98 is a 5-hydroxylysine (Lys98). Residue Ser109 is modified to Phosphoserine. Composition is skewed to low complexity over residues Lys137–Pro163 and Pro170–Pro200. Hydroxyproline is present on residues Pro170 and Pro176. A compositionally biased stretch (basic and acidic residues) spans Lys203–Lys215. Residues Asp222–Phe253 are a coiled coil. The region spanning Val259–Phe374 is the C-type lectin domain. 2 disulfides stabilise this stretch: Cys280-Cys372 and Cys350-Cys364.

It belongs to the SFTPD family. In terms of assembly, oligomeric complex of 4 set of homotrimers. In terms of processing, S-nitrosylation at Cys-34 and Cys-39 alters the quaternary structure which results in a pro-inflammatory chemoattractive signaling activity with macrophages.

The protein resides in the secreted. It is found in the extracellular space. Its subcellular location is the extracellular matrix. The protein localises to the surface film. Contributes to the lung's defense against inhaled microorganisms, organic antigens and toxins. Interacts with compounds such as bacterial lipopolysaccharides, oligosaccharides and fatty acids and modulates leukocyte action in immune response. May participate in the extracellular reorganization or turnover of pulmonary surfactant. Binds strongly maltose residues and to a lesser extent other alpha-glucosyl moieties. In Rattus norvegicus (Rat), this protein is Pulmonary surfactant-associated protein D (Sftpd).